The sequence spans 863 residues: DNA mismatch repair protein MutS (863 aa).

ATP is bound at residue 607–614 (GPNMAGKS).

Belongs to the DNA mismatch repair MutS family.

Its function is as follows. This protein is involved in the repair of mismatches in DNA. It is possible that it carries out the mismatch recognition step. This protein has a weak ATPase activity. The sequence is that of DNA mismatch repair protein MutS from Caldicellulosiruptor saccharolyticus (strain ATCC 43494 / DSM 8903 / Tp8T 6331).